A 64-amino-acid polypeptide reads, in one-letter code: Alpha-conotoxin CnIC (64 aa).

Residues 1–21 (MGMRMMFTVFLLVVLTTTVVS) form the signal peptide. Residues 22–47 (FPSDSASDVRDDEAKDERSDMYKSKR) constitute a propeptide that is removed on maturation. N48 is modified (deamidated asparagine; in CnIH; partial). 2 disulfides stabilise this stretch: C51–C56 and C52–C62. Position 62 is a cysteine amide (C62).

It belongs to the conotoxin A superfamily. In terms of tissue distribution, expressed by the venom duct.

It is found in the secreted. Its function is as follows. Alpha-conotoxins act on postsynaptic membranes, they bind to the nicotinic acetylcholine receptors (nAChR) and thus inhibit them. This Conus consors (Singed cone) protein is Alpha-conotoxin CnIC.